The primary structure comprises 340 residues: Zinc finger protein 488 (340 aa).

An important for transcriptional repression activity region spans residues 72-187 (AELALLVAPG…SVFPAGESAD (116 aa)). Residues 77–180 (LVAPGKPRPG…AERPELTSVF (104 aa)) are disordered. Over residues 82-91 (KPRPGKPLPP) the composition is skewed to pro residues. The span at 106–125 (PRMKDRQVDAQAQEREHDDP) shows a compositional bias: basic and acidic residues. 2 consecutive C2H2-type zinc fingers follow at residues 275–302 (NWCAKCNLSFRLTSDLVFHMRSHHKKEH) and 317–339 (LACPVCQEHFRERHHLSRHMTSH). Residues 298-305 (HKKEHAGP) carry the Nuclear localization signal motif.

This sequence belongs to the krueppel C2H2-type zinc-finger protein family. In terms of assembly, interacts with OLIG2.

Its subcellular location is the nucleus. Transcriptional repressor. Plays a role in oligodendrocyte differentiation, together with OLIG2. Mediates Notch signaling-activated formation of oligodendrocyte precursors. Promotes differentiation of adult neural stem progenitor cells (NSPCs) into mature oligodendrocytes and contributes to remyelination following nerve injury. This is Zinc finger protein 488 (ZNF488) from Homo sapiens (Human).